The primary structure comprises 347 residues: Uroporphyrinogen decarboxylase (347 aa).

Substrate is bound by residues 24 to 28, D74, Y145, S200, and H315; that span reads RQAGR.

Belongs to the uroporphyrinogen decarboxylase family. Homodimer.

The protein resides in the cytoplasm. The enzyme catalyses uroporphyrinogen III + 4 H(+) = coproporphyrinogen III + 4 CO2. The protein operates within porphyrin-containing compound metabolism; protoporphyrin-IX biosynthesis; coproporphyrinogen-III from 5-aminolevulinate: step 4/4. Functionally, catalyzes the decarboxylation of four acetate groups of uroporphyrinogen-III to yield coproporphyrinogen-III. The sequence is that of Uroporphyrinogen decarboxylase from Hydrogenobaculum sp. (strain Y04AAS1).